We begin with the raw amino-acid sequence, 358 residues long: Type II restriction enzyme HpaII (358 aa).

As to quaternary structure, homodimer.

The catalysed reaction is Endonucleolytic cleavage of DNA to give specific double-stranded fragments with terminal 5'-phosphates.. Functionally, an E and P subtype restriction enzyme that recognizes the double-stranded sequence 5'-CCGG-3' and cleaves after C-1. This Haemophilus parainfluenzae protein is Type II restriction enzyme HpaII.